The following is a 312-amino-acid chain: Acetyl-coenzyme A carboxylase carboxyl transferase subunit alpha (312 aa).

One can recognise a CoA carboxyltransferase C-terminal domain in the interval 36-286 (RLDKEVKSIY…KEYFLDALRT (251 aa)).

It belongs to the AccA family. Acetyl-CoA carboxylase is a heterohexamer composed of biotin carboxyl carrier protein (AccB), biotin carboxylase (AccC) and two subunits each of ACCase subunit alpha (AccA) and ACCase subunit beta (AccD).

The protein resides in the cytoplasm. It carries out the reaction N(6)-carboxybiotinyl-L-lysyl-[protein] + acetyl-CoA = N(6)-biotinyl-L-lysyl-[protein] + malonyl-CoA. It participates in lipid metabolism; malonyl-CoA biosynthesis; malonyl-CoA from acetyl-CoA: step 1/1. Functionally, component of the acetyl coenzyme A carboxylase (ACC) complex. First, biotin carboxylase catalyzes the carboxylation of biotin on its carrier protein (BCCP) and then the CO(2) group is transferred by the carboxyltransferase to acetyl-CoA to form malonyl-CoA. The chain is Acetyl-coenzyme A carboxylase carboxyl transferase subunit alpha from Helicobacter pylori (strain J99 / ATCC 700824) (Campylobacter pylori J99).